Reading from the N-terminus, the 32-residue chain is MEALVYTFLLIGTLIVIFFAVFFRETPRIIKK.

Residues 3–23 (ALVYTFLLIGTLIVIFFAVFF) form a helical membrane-spanning segment.

The protein belongs to the PsbT family. As to quaternary structure, PSII is composed of 1 copy each of membrane proteins PsbA, PsbB, PsbC, PsbD, PsbE, PsbF, PsbH, PsbI, PsbJ, PsbK, PsbL, PsbM, PsbT, PsbX, PsbY, PsbZ, Psb30/Ycf12, at least 3 peripheral proteins of the oxygen-evolving complex and a large number of cofactors. It forms dimeric complexes.

It localises to the plastid. The protein localises to the chloroplast thylakoid membrane. In terms of biological role, found at the monomer-monomer interface of the photosystem II (PS II) dimer, plays a role in assembly and dimerization of PSII. PSII is a light-driven water plastoquinone oxidoreductase, using light energy to abstract electrons from H(2)O, generating a proton gradient subsequently used for ATP formation. In Phaeodactylum tricornutum (strain CCAP 1055/1), this protein is Photosystem II reaction center protein T.